A 513-amino-acid polypeptide reads, in one-letter code: GMP synthase [glutamine-hydrolyzing] (513 aa).

The 191-residue stretch at 8–198 (MILVLDFGSQ…VFGVCDCDGK (191 aa)) folds into the Glutamine amidotransferase type-1 domain. Cysteine 85 (nucleophile) is an active-site residue. Active-site residues include histidine 172 and glutamate 174. The region spanning 199–388 (WSMENFIEIE…LGIPDDIVWR (190 aa)) is the GMPS ATP-PPase domain. An ATP-binding site is contributed by 226-232 (SGGVDSS).

Homodimer.

It catalyses the reaction XMP + L-glutamine + ATP + H2O = GMP + L-glutamate + AMP + diphosphate + 2 H(+). The protein operates within purine metabolism; GMP biosynthesis; GMP from XMP (L-Gln route): step 1/1. In terms of biological role, catalyzes the synthesis of GMP from XMP. This chain is GMP synthase [glutamine-hydrolyzing], found in Bacillus pumilus (strain SAFR-032).